The following is a 166-amino-acid chain: uncharacterized protein (166 aa).

This is an uncharacterized protein from Saccharomyces cerevisiae (strain ATCC 204508 / S288c) (Baker's yeast).